The primary structure comprises 190 residues: CASP-like protein 2U2 (190 aa).

The Cytoplasmic segment spans residues 1–10; it reads MGEKMQGFQG. Residues 11–31 traverse the membrane as a helical segment; sequence WSIGIRFLTSCVSIASLILLL. Over 32–59 the chain is Extracellular; it reads KSKQTVQVSVGLDYVTQQVKYSDTSAFV. The helical transmembrane segment at 60 to 80 threads the bilayer; that stretch reads YLVFSDILVAVYCIVVLVGLI. At 81–94 the chain is on the cytoplasmic side; it reads PAALGKSHPGKAGQ. A helical membrane pass occupies residues 95 to 115; sequence WAIFIFDQVLAYVLLAAASSA. Residues 116–144 are Extracellular-facing; it reads TEVAYLADKGMAKTSWEAVCPRFAHFCHT. A helical transmembrane segment spans residues 145 to 165; the sequence is VMASISLSFVAVLLLALLAVV. Residues 166–190 are Cytoplasmic-facing; sequence SASGLFGRFYRRPLFAVKMRHNTLI.

Belongs to the Casparian strip membrane proteins (CASP) family. In terms of assembly, homodimer and heterodimers.

It localises to the cell membrane. The protein is CASP-like protein 2U2 of Pteridium aquilinum subsp. aquilinum (Bracken fern).